The chain runs to 969 residues: MIFRKSISKSPSSKGSTVCFRCGQAFQRRETPISFGGHMWHKDCFCCTKCDKGLEHSDQMLVQTSDGRPVCSSCAHTCTACRMRIKDYALMSGYDSYHRECFRCHDCRKQIIDSNFKRDNRTIFCNDCKQVRHPSRSSDESADYHNFEVDVTIKPTETKSSVESNKSLSIEIMSPQKPPLSPFGGSRDRLVSETPTNMSQAEGGNVPNDGQDSNLASNSADSLLPSAKNRSFSSFTSFESPMKYDDSFFPISPSISPLQKVNKQQQIESPTATFPLSKNTWKNRFHTFHKQSFTPVNDSSSSDSLKPTINEEALDDFAGSASPYKTMSLTDRAEPIVMNGHMRSLHNATSPFRPFSPSYRSSDTHSPRTRSPNVQTHKKTSSQPSDLSSFAQLLSPPQVLSPKPNGGGHKSFRHSHSLSETSQQTLVPSLGSNGEYHLPTNDHSSTPAQSERDSDVEELREQLENLTALTKKLSERLSSSTFDNSKFIRTEDKDTVRSAKLEICEKFFSFADVTDDPTLKDPKHQDLVAAANAYMAMLRESYGTEINNLLERRNELLDDYNNVQKILNESLEASVHLNTKNLELADLNNNLVKQIQHRVPPENQSNLEHTITTSSKNTTSSINPLTAVSSNSGQSSGRPGPLSPNLNVTTRIDIKGKKGSMHLQPRDVNRKVPFKSMHTKSKSADPVVGNEDRTQCDHVFHVNAIFKPSRCYICSESVWGSELRCFHCSISCHSRCLKRLFAESEHEKTMSETVSENSKWMPEMPTRMPPPGPSPTMFGRSLENQLKIEGSVLPQVIAMCVSCVDAHGLEVEGIYRISGSASQVRVLVDEFENGSIRMEHLTSDLFACTSVLKTYLHRLPEPVIPGTQYEELLEAEKIEKEEEKIERVVEVMKTLHPAHLSVFRFLIAHLGRVCKHAEKNLMNSKNVSTVFAPTLMRDKVNRFDLQHATKKSTALQFMLDNVDKILHNL.

LIM zinc-binding domains are found at residues 17-81 (TVCF…CTAC) and 76-135 (HTCT…RHPS). Disordered stretches follow at residues 170–223 (IEIM…ADSL), 348–459 (ATSP…VEEL), and 613–646 (TSSKNTTSSINPLTAVSSNSGQSSGRPGPLSPNL). Residues 193–202 (ETPTNMSQAE) show a composition bias toward polar residues. 2 stretches are compositionally biased toward low complexity: residues 212-223 (DSNLASNSADSL) and 350-361 (SPFRPFSPSYRS). 2 stretches are compositionally biased toward polar residues: residues 369–392 (TRSPNVQTHKKTSSQPSDLSSFAQ) and 418–432 (LSETSQQTLVPSLGS). Residues 450 to 459 (SERDSDVEEL) show a composition bias toward basic and acidic residues. The span at 613-623 (TSSKNTTSSIN) shows a compositional bias: low complexity. Over residues 624 to 637 (PLTAVSSNSGQSSG) the composition is skewed to polar residues. The Phorbol-ester/DAG-type zinc-finger motif lies at 697–744 (DHVFHVNAIFKPSRCYICSESVWGSELRCFHCSISCHSRCLKRLFAES). Positions 780 to 966 (RSLENQLKIE…FMLDNVDKIL (187 aa)) constitute a Rho-GAP domain.

In terms of assembly, interacts with dil1.

Its subcellular location is the cell tip. Functionally, GTPase-activating protein for Rho-type proteins. The sequence is that of Probable Rho-type GTPase-activating protein 3 (rga3) from Schizosaccharomyces pombe (strain 972 / ATCC 24843) (Fission yeast).